The following is a 351-amino-acid chain: MQRFVSKFVSTPPVPKKFQEIFPKKRTVNKILFQLDTRLTYHEMYPIFLQVSQNTNEENIPWRKKYPYIRSSDIMQMRNVLITLRTQNKFVHKDLLAMEDKLLNIAAELGNNDAISILSFNVIHEYKKENVKSSYEKDIETANEFIKKLYARNHHLTVKLIGDLFFENKTYDKAEKYYQEFLKLENSTKLAGEVHGKLGEIQIKQVNGFLKAEKSWLSCIELLEIERSSRWYFLLARLYMSSEPMKAKALLENCASIGFKECFKTLGFLELNYFNNYERAKEWFKTGMEIMDLECFFGFFDCCVKEENFKGARDCLESVKKLGNDKDKKTMINVFLESRKDSIKLLDKARL.

TPR repeat units follow at residues 155-188 (HLTV…ENST) and 260-294 (KECF…MDLE).

As to quaternary structure, interacts with COX18.

The protein resides in the mitochondrion inner membrane. Its function is as follows. Required to stabilize mitochondrial cytochrome C oxidase subunit 2 (COX2) and to translocate the C-terminal domain of COX2 through the inner membrane. This Saccharomyces cerevisiae (strain ATCC 204508 / S288c) (Baker's yeast) protein is Protein MSS2, mitochondrial (MSS2).